A 309-amino-acid chain; its full sequence is Porphobilinogen deaminase (309 aa).

The residue at position 244 (Cys244) is an S-(dipyrrolylmethanemethyl)cysteine.

Belongs to the HMBS family. As to quaternary structure, monomer. Dipyrromethane serves as cofactor.

The catalysed reaction is 4 porphobilinogen + H2O = hydroxymethylbilane + 4 NH4(+). Its pathway is porphyrin-containing compound metabolism; protoporphyrin-IX biosynthesis; coproporphyrinogen-III from 5-aminolevulinate: step 2/4. Functionally, tetrapolymerization of the monopyrrole PBG into the hydroxymethylbilane pre-uroporphyrinogen in several discrete steps. The chain is Porphobilinogen deaminase from Listeria innocua serovar 6a (strain ATCC BAA-680 / CLIP 11262).